The sequence spans 778 residues: Arf-GAP with coiled-coil, ANK repeat and PH domain-containing protein 2 (778 aa).

The 226-residue stretch at 1-226 folds into the BAR domain; it reads MKMTVDFEEC…MKDLGAQLDR (226 aa). The PH domain maps to 266–361; sequence GIVMEGYLFK…WIKAVQTSIA (96 aa). The disordered stretch occupies residues 371 to 391; sequence SEKLDKKSSPSTGSLDSGNES. Over residues 379–388 the composition is skewed to polar residues; it reads SPSTGSLDSG. A phosphoserine mark is found at serine 384 and serine 387. Residues 399–520 form the Arf-GAP domain; the sequence is ESALQRVQCV…KFVDKYSVSS (122 aa). The C4-type zinc finger occupies 414–437; it reads CCDCGLADPRWASINLGITLCIEC. The interval 518–596 is disordered; that stretch reads VSSSPPEQEK…EPEGERQDSS (79 aa). Residue serine 521 is modified to Phosphoserine. Basic and acidic residues predominate over residues 524 to 539; the sequence is EQEKKVVSKDSEEKRL. The segment covering 550 to 569 has biased composition (polar residues); that stretch reads VRTSIQSSVKSNDSGIQQSS. Phosphoserine occurs at positions 581 and 584. ANK repeat units lie at residues 640 to 669, 673 to 702, and 706 to 735; these read NKAT…NVNQ, QGRG…NQHA, and EGKD…NEEM. Phosphotyrosine is present on tyrosine 742. A Phosphoserine modification is found at serine 775.

Interacts with RAB35 (GTP-bound form); the interaction is direct and probably recruits ACAP2 to membranes. Interacts with MICALL1; the interaction is indirect through RAB35.

Its subcellular location is the endosome membrane. It is found in the cell membrane. Its activity is regulated as follows. GAP activity stimulated by phosphatidylinositol 4,5-bisphosphate (PIP2) and phosphatidic acid. Functionally, GTPase-activating protein (GAP) for ADP ribosylation factor 6 (ARF6). Doesn't show GAP activity for RAB35. The sequence is that of Arf-GAP with coiled-coil, ANK repeat and PH domain-containing protein 2 (ACAP2) from Oryctolagus cuniculus (Rabbit).